A 402-amino-acid chain; its full sequence is NADH dehydrogenase [ubiquinone] 1 alpha subcomplex subunit 9, mitochondrial (402 aa).

Residues 1 to 43 (MQVVSRRLVQRPLVGGASIYSSSSLRSLYGVSNHLNGTDNCRY) constitute a mitochondrion transit peptide.

It belongs to the complex I NDUFA9 subunit family. As to quaternary structure, complex I is composed of at least 49 different subunits. This a component of the hydrophobic protein fraction. Requires FAD as cofactor.

The protein resides in the mitochondrion matrix. Functionally, accessory subunit of the mitochondrial membrane respiratory chain NADH dehydrogenase (Complex I), that is believed not to be involved in catalysis. Complex I functions in the transfer of electrons from NADH to the respiratory chain. The immediate electron acceptor for the enzyme is believed to be ubiquinone. This chain is NADH dehydrogenase [ubiquinone] 1 alpha subcomplex subunit 9, mitochondrial, found in Arabidopsis thaliana (Mouse-ear cress).